Consider the following 380-residue polypeptide: 3-dehydroquinate synthase (380 aa).

It belongs to the archaeal-type DHQ synthase family.

The catalysed reaction is 2-amino-2,3,7-trideoxy-D-lyxo-hept-6-ulosonate + NAD(+) + H2O = 3-dehydroquinate + NH4(+) + NADH + H(+). In terms of biological role, catalyzes the oxidative deamination and cyclization of 2-amino-3,7-dideoxy-D-threo-hept-6-ulosonic acid (ADH) to yield 3-dehydroquinate (DHQ), which is fed into the canonical shikimic pathway of aromatic amino acid biosynthesis. The polypeptide is 3-dehydroquinate synthase (Methanosarcina mazei (strain ATCC BAA-159 / DSM 3647 / Goe1 / Go1 / JCM 11833 / OCM 88) (Methanosarcina frisia)).